The primary structure comprises 72 residues: Translation initiation factor IF-1 (72 aa).

The S1-like domain maps to 1 to 72 (MSKEEVLEFS…TKGRITYRYK (72 aa)).

This sequence belongs to the IF-1 family. Component of the 30S ribosomal translation pre-initiation complex which assembles on the 30S ribosome in the order IF-2 and IF-3, IF-1 and N-formylmethionyl-tRNA(fMet); mRNA recruitment can occur at any time during PIC assembly.

It is found in the cytoplasm. In terms of biological role, one of the essential components for the initiation of protein synthesis. Stabilizes the binding of IF-2 and IF-3 on the 30S subunit to which N-formylmethionyl-tRNA(fMet) subsequently binds. Helps modulate mRNA selection, yielding the 30S pre-initiation complex (PIC). Upon addition of the 50S ribosomal subunit IF-1, IF-2 and IF-3 are released leaving the mature 70S translation initiation complex. This is Translation initiation factor IF-1 from Bartonella quintana (strain Toulouse) (Rochalimaea quintana).